The following is a 339-amino-acid chain: Phospho-N-acetylmuramoyl-pentapeptide-transferase (339 aa).

The next 10 helical transmembrane spans lie at 4–24 (TTII…PFFI), 53–73 (MGGT…AFVL), 80–100 (AFGA…IGFL), 113–133 (GLTA…FYLV), 145–165 (LFGF…FWVV), 176–196 (GIDG…SVIA), 202–222 (FDVL…FVYN), 228–248 (VFMG…ISIT), 253–273 (WTLL…MLQV), and 318–338 (VDFF…AILY).

The protein belongs to the glycosyltransferase 4 family. MraY subfamily. It depends on Mg(2+) as a cofactor.

It is found in the cell membrane. The enzyme catalyses UDP-N-acetyl-alpha-D-muramoyl-L-alanyl-gamma-D-glutamyl-L-lysyl-D-alanyl-D-alanine + di-trans,octa-cis-undecaprenyl phosphate = Mur2Ac(oyl-L-Ala-gamma-D-Glu-L-Lys-D-Ala-D-Ala)-di-trans,octa-cis-undecaprenyl diphosphate + UMP. The protein operates within cell wall biogenesis; peptidoglycan biosynthesis. In terms of biological role, catalyzes the initial step of the lipid cycle reactions in the biosynthesis of the cell wall peptidoglycan: transfers peptidoglycan precursor phospho-MurNAc-pentapeptide from UDP-MurNAc-pentapeptide onto the lipid carrier undecaprenyl phosphate, yielding undecaprenyl-pyrophosphoryl-MurNAc-pentapeptide, known as lipid I. The polypeptide is Phospho-N-acetylmuramoyl-pentapeptide-transferase (Streptococcus mutans serotype c (strain ATCC 700610 / UA159)).